We begin with the raw amino-acid sequence, 209 residues long: Neurotrophin-4 (209 aa).

The signal sequence occupies residues methionine 1–methionine 21. Residues glutamate 22–arginine 79 constitute a propeptide that is removed on maturation. Asparagine 75 carries N-linked (GlcNAc...) asparagine glycosylation. Cystine bridges form between cysteine 96–cysteine 169, cysteine 140–cysteine 198, and cysteine 157–cysteine 200.

Belongs to the NGF-beta family. Expressed in thymus, muscle, ovary, brain, heart, stomach and kidney. Expressed in both embryo and adult tissues.

Its subcellular location is the secreted. In terms of biological role, target-derived survival factor for peripheral sensory sympathetic neurons. May promote ameloblast differentiation and subsequent reduction in proliferation of ameloblasts. This is Neurotrophin-4 (Ntf4) from Rattus norvegicus (Rat).